The chain runs to 358 residues: GTPase Obg (358 aa).

The 159-residue stretch at Met-1–Leu-159 folds into the Obg domain. The OBG-type G domain maps to Ala-160 to Glu-334. Residues Gly-166–Ser-173, Phe-191–Tyr-195, Asp-213–Gly-216, Asn-284–Asp-287, and Ser-315–Leu-317 contribute to the GTP site. Mg(2+)-binding residues include Ser-173 and Thr-193. The disordered stretch occupies residues Asp-337–Glu-358. Residues Arg-341–Glu-358 are compositionally biased toward basic and acidic residues.

This sequence belongs to the TRAFAC class OBG-HflX-like GTPase superfamily. OBG GTPase family. As to quaternary structure, monomer. Requires Mg(2+) as cofactor.

The protein localises to the cytoplasm. Its function is as follows. An essential GTPase which binds GTP, GDP and possibly (p)ppGpp with moderate affinity, with high nucleotide exchange rates and a fairly low GTP hydrolysis rate. Plays a role in control of the cell cycle, stress response, ribosome biogenesis and in those bacteria that undergo differentiation, in morphogenesis control. In Alkalilimnicola ehrlichii (strain ATCC BAA-1101 / DSM 17681 / MLHE-1), this protein is GTPase Obg.